Here is a 250-residue protein sequence, read N- to C-terminus: UPF0259 membrane protein PC1_1998 (250 aa).

6 consecutive transmembrane segments (helical) span residues 20-40 (FISI…LNHA), 90-110 (FAAL…IQLV), 132-152 (LLFL…LLVI), 156-176 (LLAI…SGIF), 192-212 (ATAP…LVVS), and 222-242 (LGVV…IYLF).

Belongs to the UPF0259 family.

The protein localises to the cell inner membrane. This chain is UPF0259 membrane protein PC1_1998, found in Pectobacterium carotovorum subsp. carotovorum (strain PC1).